Reading from the N-terminus, the 357-residue chain is Deoxyuridylate hydroxymethyltransferase (357 aa).

Belongs to the thymidylate synthase family.

The enzyme catalyses dUMP + (6R)-5,10-methylene-5,6,7,8-tetrahydrofolate + H2O = 5-hydroxymethyl-dUMP + (6S)-5,6,7,8-tetrahydrofolate. Its function is as follows. Catalyzes formation of 5-hydroxymethyldeoxyuridylate (5HMdUMP) as a step in the pathway that replaces dTMP by thymidine hypermodifications in the viral genome. As a final result of the pathway of hypermodification, 5-Nalpha-putrescinylthymidine (Nalpha-PutT) substitutes for about 50% of thymidines in the viral DNA. These modifications probably prevent degradation of viral genome by the host restriction-modification antiviral defense system. The polypeptide is Deoxyuridylate hydroxymethyltransferase (Delftia acidovorans (Pseudomonas acidovorans)).